A 217-amino-acid polypeptide reads, in one-letter code: Large ribosomal subunit protein uL3 (217 aa).

Residues 133-145 show a composition bias toward polar residues; it reads GRASHGNSRSHNV. The tract at residues 133–153 is disordered; that stretch reads GRASHGNSRSHNVPGSIGMAQ. Glutamine 153 is subject to N5-methylglutamine.

Belongs to the universal ribosomal protein uL3 family. Part of the 50S ribosomal subunit. Forms a cluster with proteins L14 and L19. In terms of processing, methylated by PrmB.

Functionally, one of the primary rRNA binding proteins, it binds directly near the 3'-end of the 23S rRNA, where it nucleates assembly of the 50S subunit. This chain is Large ribosomal subunit protein uL3, found in Ralstonia pickettii (strain 12J).